The primary structure comprises 571 residues: La-related protein 7 (571 aa).

Methionine 1 is modified (N-acetylmethionine). The segment covering 1–17 (METENQKTMEESTEKRK) has biased composition (basic and acidic residues). Disordered regions lie at residues 1–25 (METENQKTMEESTEKRKEEKKKRSR) and 181–366 (LNNP…ERHK). In terms of domain architecture, HTH La-type RNA-binding spans 23–117 (RSRVKQVLAD…KPLGERPKDE (95 aa)). The RRM domain occupies 120–198 (RTVYVELLPK…PRKPGIFPKT (79 aa)). Residues 214 to 223 (KKKKKKKGRI) show a composition bias toward basic residues. Lysine 232 participates in a covalent cross-link: Glycyl lysine isopeptide (Lys-Gly) (interchain with G-Cter in SUMO2). Residue threonine 252 is modified to Phosphothreonine. Phosphoserine occurs at positions 254 and 257. Threonine 261 carries the phosphothreonine modification. The span at 287-296 (KAGKRERSSA) shows a compositional bias: basic and acidic residues. A phosphoserine mark is found at serine 294, serine 295, and serine 335. Threonine 336 bears the Phosphothreonine mark. The span at 342–351 (PGDRKGDSLS) shows a compositional bias: basic and acidic residues. The residue at position 349 (serine 349) is a Phosphoserine. The segment covering 352-365 (KGKRKHKKKHKERH) has biased composition (basic residues). A Glycyl lysine isopeptide (Lys-Gly) (interchain with G-Cter in SUMO2) cross-link involves residue lysine 408. Residues 411–432 (SEMETESKAPPGSGQQCSTQEK) form a disordered region. The segment covering 423 to 432 (SGQQCSTQEK) has biased composition (polar residues). Residues 439-552 (QFVTGVIVKI…TEKLITKAEK (114 aa)) enclose the xRRM domain.

It belongs to the LARP7 family. In terms of assembly, core component of the 7SK RNP complex, at least composed of 7SK RNA, LARP7, MEPCE, HEXIM1 (or HEXIM2) and P-TEFb (composed of CDK9 and CCNT1/cyclin-T1). Interacts with METTL16. Interacts with RBM7; upon genotoxic stress this interaction is enhanced, triggering the release of inactive P-TEFb complex from the core, yielding to P-TEFb complex activation. Associates with box C/D small nucleolar ribonucleoprotein (snoRNP) complexes.

Its subcellular location is the nucleus. The protein localises to the nucleoplasm. Its function is as follows. RNA-binding protein that specifically binds distinct small nuclear RNA (snRNAs) and regulates their processing and function. Specifically binds the 7SK snRNA (7SK RNA) and acts as a core component of the 7SK ribonucleoprotein (RNP) complex, thereby acting as a negative regulator of transcription elongation by RNA polymerase II. The 7SK RNP complex sequesters the positive transcription elongation factor b (P-TEFb) in a large inactive 7SK RNP complex preventing RNA polymerase II phosphorylation and subsequent transcriptional elongation. The 7SK RNP complex also promotes snRNA gene transcription by RNA polymerase II via interaction with the little elongation complex (LEC). LARP7 specifically binds to the highly conserved 3'-terminal U-rich stretch of 7SK RNA; on stimulation, remains associated with 7SK RNA, whereas P-TEFb is released from the complex. LARP7 also acts as a regulator of mRNA splicing fidelity by promoting U6 snRNA processing. Specifically binds U6 snRNAs and associates with a subset of box C/D RNP complexes: promotes U6 snRNA 2'-O-methylation by facilitating U6 snRNA loading into box C/D RNP complexes. U6 snRNA 2'-O-methylation is required for mRNA splicing fidelity. Binds U6 snRNAs with a 5'-CAGGG-3' sequence motif. U6 snRNA processing is required for spermatogenesis. The chain is La-related protein 7 from Rattus norvegicus (Rat).